Reading from the N-terminus, the 653-residue chain is MGKVVGIDLGTTNSCVSIMEGGEPKVIENSEGVRTTPSMVAFTNQGERLVGQAAKRQAVTNPTNTLYAIKRLIGRRFSDPLTAKDQGLVPYKIVKADNGDAWVEADGKKMSPSECSAMILQKMKQTAEDYLGESVSEAVITVPAYFNDAQRQATKDAGRIAGLEVLRIINEPTAAALAYGLDKKDGQTIAVFDLGGGTFDISILEIGDGVFEVKSTNGDTFLGGEDFDMAIIDYLADQFKKENSIDLRKDSMALQRLKEAAEKAKIELSSSNQTDINLPFITADASGPKHLNLSLTRAKLESLVDELVQRTLAPCRTALKDAGMTAADIDEVILVGGMTRMPKVQAVVGQFFGKEPHKGVNPDEVVAIGAAIQGGVLKGEVQDVLLLDVTPLSLGIETLGGVFTKLIEKNTTVPTRKSQVFSTAADNQSAVTIRVAQGEREMFSDNKTLGQFDLVGIAPAPRGMPQIEVTFDIDANGMVHVSAKDKGTGKEQSIHIEASGGLTSEEIDRMVHEAESHAEEDAKKRALIEARNNADSLVYSSEKSLKEHSDKLDDALKNQITAAIEDLKAVMPKEDPEAISSKTQALMELSMKMGEQIYKENPEAAGMDPEAAAHAAGMHGGAATGGGDGANKHGKGAEDVVEAEFEEVNDDKK.

The residue at position 198 (Thr-198) is a Phosphothreonine; by autocatalysis. Residues 608–617 (DPEAAAHAAG) show a composition bias toward low complexity. Positions 608–653 (DPEAAAHAAGMHGGAATGGGDGANKHGKGAEDVVEAEFEEVNDDKK) are disordered. Positions 618–629 (MHGGAATGGGDG) are enriched in gly residues. The segment covering 639–653 (DVVEAEFEEVNDDKK) has biased composition (acidic residues).

Belongs to the heat shock protein 70 family.

In terms of biological role, acts as a chaperone. This Magnetococcus marinus (strain ATCC BAA-1437 / JCM 17883 / MC-1) protein is Chaperone protein DnaK.